A 610-amino-acid chain; its full sequence is Elongation factor 4 (610 aa).

The 183-residue stretch at 11 to 193 (EKIRNFSIIA…QIVEKVPAPT (183 aa)) folds into the tr-type G domain. GTP-binding positions include 23–28 (DHGKST) and 140–143 (NKID).

The protein belongs to the TRAFAC class translation factor GTPase superfamily. Classic translation factor GTPase family. LepA subfamily.

It is found in the cell membrane. The enzyme catalyses GTP + H2O = GDP + phosphate + H(+). In terms of biological role, required for accurate and efficient protein synthesis under certain stress conditions. May act as a fidelity factor of the translation reaction, by catalyzing a one-codon backward translocation of tRNAs on improperly translocated ribosomes. Back-translocation proceeds from a post-translocation (POST) complex to a pre-translocation (PRE) complex, thus giving elongation factor G a second chance to translocate the tRNAs correctly. Binds to ribosomes in a GTP-dependent manner. This Streptococcus pyogenes serotype M3 (strain ATCC BAA-595 / MGAS315) protein is Elongation factor 4.